A 42-amino-acid polypeptide reads, in one-letter code: Photosystem I reaction center subunit IX (42 aa).

The helical transmembrane segment at 8–28 threads the bilayer; it reads YLSTAPVLLTIWLSFTAALVI.

The protein belongs to the PsaJ family.

It is found in the plastid. It localises to the chloroplast thylakoid membrane. May help in the organization of the PsaE and PsaF subunits. This chain is Photosystem I reaction center subunit IX, found in Guillardia theta (Cryptophyte).